Consider the following 449-residue polypeptide: Phosphoglucosamine mutase (449 aa).

Ser100 serves as the catalytic Phosphoserine intermediate. Mg(2+) contacts are provided by Ser100, Asp241, Asp243, and Asp245. A Phosphoserine modification is found at Ser100.

It belongs to the phosphohexose mutase family. Mg(2+) is required as a cofactor. Activated by phosphorylation.

It carries out the reaction alpha-D-glucosamine 1-phosphate = D-glucosamine 6-phosphate. Catalyzes the conversion of glucosamine-6-phosphate to glucosamine-1-phosphate. The sequence is that of Phosphoglucosamine mutase from Caldicellulosiruptor saccharolyticus (strain ATCC 43494 / DSM 8903 / Tp8T 6331).